The primary structure comprises 200 residues: Lipopolysaccharide core heptose(II)-phosphate phosphatase (200 aa).

A signal peptide spans 1–25 (MLAFCRSSLKSKKYFIILLALAAIA).

It belongs to the phosphoglycerate mutase family. Ais subfamily.

It localises to the periplasm. Its pathway is bacterial outer membrane biogenesis; lipopolysaccharide metabolism. Its function is as follows. Catalyzes the dephosphorylation of heptose(II) of the outer membrane lipopolysaccharide core. This Escherichia coli O9:H4 (strain HS) protein is Lipopolysaccharide core heptose(II)-phosphate phosphatase.